Reading from the N-terminus, the 930-residue chain is Endoplasmic reticulum aminopeptidase 1 (930 aa).

At 1-2 the chain is on the cytoplasmic side; that stretch reads MP. Residues 3–23 traverse the membrane as a helical; Signal-anchor for type II membrane protein segment; sequence SLLSLVLTFLAVSSPSCCQNS. Residues 24-930 are Lumenal-facing; sequence DTASPKASNG…WLQKERQELL (907 aa). N-linked (GlcNAc...) asparagine glycans are attached at residues N59 and N143. Substrate contacts are provided by residues E172 and 306 to 310; that span reads GAMEN. H342 contacts Zn(2+). Catalysis depends on E343, which acts as the Proton acceptor. 2 residues coordinate Zn(2+): H346 and E365. C393 and C432 are disulfide-bonded. N-linked (GlcNAc...) asparagine glycans are attached at residues N403 and N655. C725 and C732 are joined by a disulfide. N749 and N890 each carry an N-linked (GlcNAc...) asparagine glycan.

This sequence belongs to the peptidase M1 family. As to quaternary structure, monomer. May also exist as a heterodimer; with ERAP2. Interacts with RBMX. Zn(2+) serves as cofactor. Post-translationally, N-glycosylated. Ubiquitous.

The protein localises to the endoplasmic reticulum membrane. Functionally, aminopeptidase that plays a central role in peptide trimming, a step required for the generation of most HLA class I-binding peptides. Peptide trimming is essential to customize longer precursor peptides to fit them to the correct length required for presentation on MHC class I molecules. Strongly prefers substrates 9-16 residues long. Rapidly degrades 13-mer to a 9-mer and then stops. Preferentially hydrolyzes the residue Leu and peptides with a hydrophobic C-terminus, while it has weak activity toward peptides with charged C-terminus. May play a role in the inactivation of peptide hormones. May be involved in the regulation of blood pressure through the inactivation of angiotensin II and/or the generation of bradykinin in the kidney. This is Endoplasmic reticulum aminopeptidase 1 (Erap1) from Rattus norvegicus (Rat).